Reading from the N-terminus, the 325-residue chain is Malate dehydrogenase (325 aa).

Residue 9-15 (GAAGAIG) coordinates NAD(+). Positions 90 and 96 each coordinate substrate. NAD(+)-binding positions include Asn-103, Gln-110, and 127–129 (VGN). Substrate-binding residues include Asn-129 and Arg-160. His-185 functions as the Proton acceptor in the catalytic mechanism.

It belongs to the LDH/MDH superfamily. MDH type 2 family.

It catalyses the reaction (S)-malate + NAD(+) = oxaloacetate + NADH + H(+). Its function is as follows. Catalyzes the reversible oxidation of malate to oxaloacetate. The protein is Malate dehydrogenase of Rubrobacter xylanophilus (strain DSM 9941 / JCM 11954 / NBRC 16129 / PRD-1).